The sequence spans 553 residues: MLSVRVAAAVVRALPRRAGLVSRNALGSSFIAARNFHASNTHLQKTGTAEMSSILEERILGADTSVDLEETGRVLSIGDGIARVHGLRNVQAEEMVEFSSGLKGMSLNLEPDNVGVVVFGNDKLIKEGDIVKRTGAIVDVPVGEELLGRVVDALGNAIDGKGPISSKTRRRVGLKAPGIIPRISVREPMQTGIKAVDSLVPIGRGQRELIIGDRQTGKTSIAIDTIINQKRFNDGSDEKKKLYCIYVAIGQKRSTVAQLVKRLTDADAMKYTIVVSATASDAAPLQYLAPYSGCSMGEYFRDNGKHALIIYDDLSKQAVAYRQMSLLLRRPPGREAYPGDVFYLHSRLLERAAKMNDAFGGGSLTALPVIETQAGDVSAYIPTNVISITDGQIFLETELFYKGIRPAINVGLSVSRVGSAAQTRAMKQVAGTMKLELAQYREVAAFAQFGSDLDAATQQLLSRGVRLTELLKQGQYSPMAIEEQVAVIYAGVRGYLDKLEPSKITKFENAFLSHVVSQHQALLGTIRADGKISEQSDAKLKEIVTNFLAGFEA.

A mitochondrion-targeting transit peptide spans 1–43 (MLSVRVAAAVVRALPRRAGLVSRNALGSSFIAARNFHASNTHL). A phosphoserine mark is found at S53 and S65. S76 is subject to Phosphoserine; alternate. O-linked (GlcNAc) serine; alternate glycosylation occurs at S76. Position 106 is a phosphoserine (S106). Residues K123, K126, and K132 each carry the N6-acetyllysine modification. T134 is modified (phosphothreonine). Residue K161 is modified to N6-acetyllysine; alternate. An N6-succinyllysine; alternate modification is found at K161. Residue S166 is modified to Phosphoserine. K167 carries the post-translational modification N6-acetyllysine; alternate. K167 carries the post-translational modification N6-succinyllysine; alternate. S184 bears the Phosphoserine mark. Position 204 is an omega-N-methylarginine (R204). 5 residues coordinate ATP: Q215, G217, K218, T219, and S220. T219 serves as a coordination point for Mg(2+). K230 and K239 each carry N6-acetyllysine; alternate. N6-succinyllysine; alternate is present on residues K230 and K239. At K240 the chain carries N6-acetyllysine. K261 and K305 each carry N6-acetyllysine; alternate. An N6-succinyllysine; alternate mark is found at K261 and K305. D312 provides a ligand contact to Mg(2+). K427 is subject to N6-acetyllysine; alternate. K427 carries the post-translational modification N6-succinyllysine; alternate. K434 is subject to N6-acetyllysine. ATP contacts are provided by Q473 and Q475. Residues K498, K506, K531, and K539 each carry the N6-acetyllysine; alternate modification. K498, K506, K531, and K539 each carry N6-succinyllysine; alternate. N6-acetyllysine is present on K541.

It belongs to the ATPase alpha/beta chains family. As to quaternary structure, homotrimer. Component of the ATP synthase complex composed at least of ATP5F1A/subunit alpha, ATP5F1B/subunit beta, ATP5MC1/subunit c (homooctomer), MT-ATP6/subunit a, MT-ATP8/subunit 8, ATP5ME/subunit e, ATP5MF/subunit f, ATP5MG/subunit g, ATP5MK/subunit k, ATP5MJ/subunit j, ATP5F1C/subunit gamma, ATP5F1D/subunit delta, ATP5F1E/subunit epsilon, ATP5PF/subunit F6, ATP5PB/subunit b, ATP5PD/subunit d, ATP5PO/subunit OSCP. ATP synthase complex consists of a soluble F(1) head domain (subunits alpha(3) and beta(3)) - the catalytic core - and a membrane F(0) domain - the membrane proton channel (subunits c, a, 8, e, f, g, k and j). These two domains are linked by a central stalk (subunits gamma, delta, and epsilon) rotating inside the F1 region and a stationary peripheral stalk (subunits F6, b, d, and OSCP). Interacts with ATPAF2. Interacts with HRG; the interaction occurs on the surface of T-cells and alters the cell morphology when associated with concanavalin (in vitro). Interacts with PLG (angiostatin peptide); the interaction inhibits most of the angiogenic properties of angiostatin. Interacts with BLOC1S1. Interacts with BCL2L1 isoform BCL-X(L); the interaction mediates the association of BCL2L1 isoform BCL-X(L) with the mitochondrial membrane F(1)F(0) ATP synthase and enhances neurons metabolic efficiency. Interacts with CLN5 and PPT1. Interacts with S100A1; this interaction increases F1-ATPase activity. Interacts with ABCB7; this interaction allows the regulation of cellular iron homeostasis and cellular reactive oxygen species (ROS) levels in cardiomyocytes. Post-translationally, acetylated on lysine residues. BLOC1S1 is required for acetylation.

Its subcellular location is the mitochondrion inner membrane. It localises to the cell membrane. Functionally, subunit alpha, of the mitochondrial membrane ATP synthase complex (F(1)F(0) ATP synthase or Complex V) that produces ATP from ADP in the presence of a proton gradient across the membrane which is generated by electron transport complexes of the respiratory chain. ATP synthase complex consist of a soluble F(1) head domain - the catalytic core - and a membrane F(1) domain - the membrane proton channel. These two domains are linked by a central stalk rotating inside the F(1) region and a stationary peripheral stalk. During catalysis, ATP synthesis in the catalytic domain of F(1) is coupled via a rotary mechanism of the central stalk subunits to proton translocation. In vivo, can only synthesize ATP although its ATP hydrolase activity can be activated artificially in vitro. With the catalytic subunit beta (ATP5F1B), forms the catalytic core in the F(1) domain. Subunit alpha does not bear the catalytic high-affinity ATP-binding sites. The sequence is that of ATP synthase F(1) complex subunit alpha, mitochondrial from Pongo abelii (Sumatran orangutan).